A 435-amino-acid polypeptide reads, in one-letter code: Zinc finger CCCH domain-containing protein 17 (435 aa).

Disordered regions lie at residues 1-30 and 58-107; these read MDIE…SSTS and TAKR…GPRH. A C3H1-type 1 zinc finger spans residues 28–54; sequence STSGKVCIHWRAGRCNRFPCPYLHSEL. Residues 77–103 show a composition bias toward gly residues; that stretch reads SGGGGGRGAGGAGGPNKWGRGPGGADG. The C3H1-type 2 zinc-finger motif lies at 108–135; that stretch reads KVPDRPCRYFLAGDCSYGEKCRYPHSYS. WD repeat units lie at residues 148–189, 191–225, 227–264, 271–308, 311–348, 355–395, and 397–435; these read GHEK…GVIN, GREI…EMNL, GPTG…NGFE, GHQL…CIQT, DHTG…SLEV, EHGA…DRGR, and FSKQ…SQTK.

This chain is Zinc finger CCCH domain-containing protein 17, found in Oryza sativa subsp. japonica (Rice).